Reading from the N-terminus, the 237-residue chain is DCN1-like protein 5 (237 aa).

Phosphoserine occurs at positions 9, 41, and 48. One can recognise a DCUN1 domain in the interval 46-232 (FSSKKCLAWF…LLDEFVEWQK (187 aa)).

As to quaternary structure, part of a complex that contains DCUN1D5, CUL1 and RBX1; this interaction is bridged by CUL1. Interacts (via the DCUN1 domain) with the unneddylated cullins: interacts with CUL1, CUL2, CUL3, CUL4A, CUL4B and CUL5; these interactions promote the cullin neddylation and the identity of the cullin dictates the affinity of the interaction. Interacts (via DCUN1 domain) with UBE2M (N-terminally acetylated form) and probably with UBE2F (N-terminally acetylated form). May also interact with regulators or subunits of cullin-RING ligases such as RBX1, RNF7, ELOB and DDB1; these interactions are bridged by cullins. Interacts with CAND1; this interaction is bridged by cullins and strongly inhibits the neddylation of cullins. These CAND-cullin-DCNL complexes can only be neddylated in the presence of a substrate adapter. In terms of processing, phosphorylation at Ser-41 is independent of cullin's interaction. Phosphorylated in response to both TICAM1 and MYD88 dependent Toll-like receptor (TLR) pathway activation. Phosphorylated in response to IL1B stimulation.

Its subcellular location is the nucleus. It localises to the cytoplasm. The protein localises to the cytoskeleton. The protein resides in the spindle. Its function is as follows. Contributes to the neddylation of all cullins by transferring NEDD8 from N-terminally acetylated NEDD8-conjugating E2s enzyme to different cullin C-terminal domain-RBX complexes which is necessary for the activation of cullin-RING E3 ubiquitin ligases (CRLs). May play a role in DNA damage response and may participate in cell proliferation and anchorage-independent cell growth. This is DCN1-like protein 5 from Pongo abelii (Sumatran orangutan).